A 176-amino-acid polypeptide reads, in one-letter code: Large ribosomal subunit protein uL6 (176 aa).

Belongs to the universal ribosomal protein uL6 family. As to quaternary structure, part of the 50S ribosomal subunit.

This protein binds to the 23S rRNA, and is important in its secondary structure. It is located near the subunit interface in the base of the L7/L12 stalk, and near the tRNA binding site of the peptidyltransferase center. In Paraburkholderia xenovorans (strain LB400), this protein is Large ribosomal subunit protein uL6.